The sequence spans 521 residues: Histone deacetylase HDAC1 (521 aa).

The segment at Lys7–Ala319 is histone deacetylase. His139 is an active-site residue. The interval Gly376 to Ile521 is disordered. Residues Ala386–Asp395 show a composition bias toward acidic residues. Ser391 carries the post-translational modification Phosphoserine. Basic and acidic residues predominate over residues Lys396–Pro414. A phosphoserine mark is found at Ser419, Ser421, and Ser455. At Thr457 the chain carries Phosphothreonine. Residues Ser459 to Gly470 show a composition bias toward basic and acidic residues. A compositionally biased stretch (low complexity) spans Ser476–Gly502. Over residues Ser503–Ala513 the composition is skewed to gly residues.

It belongs to the histone deacetylase family. HD type 1 subfamily. Component of a form of the Esc/E(z) complex present specifically during early embryogenesis which is composed of Caf1-55, esc, E(z), Su(z)12, Pcl and HDAC1. The Esc/E(z) complex may also associate with Pcl and HDAC1 during early embryogenesis. This complex is distinct from the PRC1 complex, which contains many other PcG proteins like Pc, Ph, Psc, Su(z)2. The 2 complexes however cooperate and interact together during the first 3 hours of development to establish PcG silencing. Interacts with the histone methyltransferase Su(var)3-9. Component of a complex that contains at least HDAC1, CoRest and Su(var)3-3/Hdm. Component of the DREAM complex at least composed of Myb, Caf1-55, mip40, mip120, mip130, E2f2, Dp, Rbf, Rbf2, lin-52, HDAC1 and l(3)mbt. Interacts with the chromatin-remodeler Mi-2. Interacts with Rrp6.

Its subcellular location is the nucleus. The catalysed reaction is N(6)-acetyl-L-lysyl-[histone] + H2O = L-lysyl-[histone] + acetate. Functionally, catalyzes the deacetylation of lysine residues on the N-terminal part of the core histones (H2A, H2B, H3 and H4). Histone deacetylation may constitute a tag for epigenetic repression and plays an important role in transcriptional regulation, cell cycle progression and developmental events. For instance, deacetylation of histone H3 may be a prerequisite for the subsequent recruitment of the histone methyltransferase Su(var)3-9 to histones. Involved in position-effect variegation (PEV). In the larval brain, part of a regulatory network including the transcriptional repressors klu, dpn and E(spl)mgamma-HLH which is required for type II neuroblast self-renewal and for maintaining erm in an inactive state in intermediate neural progenitors (INP). This Drosophila melanogaster (Fruit fly) protein is Histone deacetylase HDAC1.